The chain runs to 139 residues: Large ribosomal subunit protein uL16c (139 aa).

Belongs to the universal ribosomal protein uL16 family. Part of the 50S ribosomal subunit.

It is found in the plastid. The protein localises to the chloroplast. In Cicer arietinum (Chickpea), this protein is Large ribosomal subunit protein uL16c.